Reading from the N-terminus, the 470-residue chain is 6-phospho-beta-galactosidase (470 aa).

D-galactose 6-phosphate-binding residues include Q19, H116, N159, E160, and N297. Catalysis depends on E160, which acts as the Proton donor. E375 (nucleophile) is an active-site residue. D-galactose 6-phosphate-binding residues include S430, W431, K437, and Y439.

Belongs to the glycosyl hydrolase 1 family.

The enzyme catalyses a 6-phospho-beta-D-galactoside + H2O = D-galactose 6-phosphate + an alcohol. It functions in the pathway carbohydrate metabolism; lactose degradation; D-galactose 6-phosphate and beta-D-glucose from lactose 6-phosphate: step 1/1. The polypeptide is 6-phospho-beta-galactosidase (Staphylococcus aureus (strain COL)).